Reading from the N-terminus, the 204-residue chain is 3-isopropylmalate dehydratase small subunit (204 aa).

The protein belongs to the LeuD family. LeuD type 1 subfamily. As to quaternary structure, heterodimer of LeuC and LeuD.

The enzyme catalyses (2R,3S)-3-isopropylmalate = (2S)-2-isopropylmalate. The protein operates within amino-acid biosynthesis; L-leucine biosynthesis; L-leucine from 3-methyl-2-oxobutanoate: step 2/4. In terms of biological role, catalyzes the isomerization between 2-isopropylmalate and 3-isopropylmalate, via the formation of 2-isopropylmaleate. In Chloroflexus aggregans (strain MD-66 / DSM 9485), this protein is 3-isopropylmalate dehydratase small subunit.